We begin with the raw amino-acid sequence, 37 residues long: Large ribosomal subunit protein bL36c (37 aa).

Belongs to the bacterial ribosomal protein bL36 family.

Its subcellular location is the plastid. It is found in the chloroplast. This is Large ribosomal subunit protein bL36c from Adiantum capillus-veneris (Maidenhair fern).